Reading from the N-terminus, the 651-residue chain is Bromodomain-containing protein 7 (651 aa).

Disordered regions lie at residues 36–133 (ELST…EVEQ) and 257–298 (KDKV…KKKD). Basic residues predominate over residues 58-69 (HKDRKRKKRKKG). A Nuclear localization signal motif is present at residues 65 to 96 (KRKKGEKQVPGEEKEKRKRKVKEDKRKRDREH). Residues 70 to 105 (EKQVPGEEKEKRKRKVKEDKRKRDREHPDSEGEQEL) show a composition bias toward basic and acidic residues. A Bromo domain is found at 131-235 (VEQTPLQEAL…HSGMKILSQE (105 aa)). A compositionally biased stretch (basic and acidic residues) spans 271 to 298 (GSGKDKGEPVDGDTKAFKTPNKEHKKKD). Residues 533 to 564 (SEEAEIFQRKLDETTKLLRELQDAQNERLSTK) are a coiled coil.

The protein resides in the nucleus. Its subcellular location is the chromosome. In terms of biological role, acts both as coactivator and as corepressor. May play a role in chromatin remodeling. Participates in the Wnt signaling pathway. Transcriptional corepressor that down-regulates the expression of target genes. Binds to target promoters, leading to increased histone H3 acetylation. Coactivator for TP53-mediated activation of transcription of a set of target genes. Required for TP53-mediated cell-cycle arrest in response to oncogene activation. Inhibits cell cycle progression from G1 to S phase. The polypeptide is Bromodomain-containing protein 7 (BRD7) (Gallus gallus (Chicken)).